A 146-amino-acid chain; its full sequence is 3-hydroxyacyl-[acyl-carrier-protein] dehydratase FabZ (146 aa).

His48 is an active-site residue.

This sequence belongs to the thioester dehydratase family. FabZ subfamily.

The protein localises to the cytoplasm. It carries out the reaction a (3R)-hydroxyacyl-[ACP] = a (2E)-enoyl-[ACP] + H2O. Functionally, involved in unsaturated fatty acids biosynthesis. Catalyzes the dehydration of short chain beta-hydroxyacyl-ACPs and long chain saturated and unsaturated beta-hydroxyacyl-ACPs. The sequence is that of 3-hydroxyacyl-[acyl-carrier-protein] dehydratase FabZ from Campylobacter lari (strain RM2100 / D67 / ATCC BAA-1060).